A 368-amino-acid chain; its full sequence is Quinolinate synthase (368 aa).

2 residues coordinate iminosuccinate: histidine 46 and serine 63. Cysteine 110 is a binding site for [4Fe-4S] cluster. Iminosuccinate-binding positions include 141–143 (YVN) and serine 162. [4Fe-4S] cluster is bound at residue cysteine 230. Iminosuccinate contacts are provided by residues 256-258 (HPE) and threonine 273. Cysteine 320 is a [4Fe-4S] cluster binding site.

It belongs to the quinolinate synthase family. Type 3 subfamily. It depends on [4Fe-4S] cluster as a cofactor.

It localises to the cytoplasm. The enzyme catalyses iminosuccinate + dihydroxyacetone phosphate = quinolinate + phosphate + 2 H2O + H(+). The protein operates within cofactor biosynthesis; NAD(+) biosynthesis; quinolinate from iminoaspartate: step 1/1. Its function is as follows. Catalyzes the condensation of iminoaspartate with dihydroxyacetone phosphate to form quinolinate. The polypeptide is Quinolinate synthase (Bacillus mycoides (strain KBAB4) (Bacillus weihenstephanensis)).